The sequence spans 294 residues: Putative glucose-6-phosphate 1-epimerase (294 aa).

The substrate site is built by Arg-74 and Arg-99. The active site involves His-164. Asp-208 is a binding site for substrate. Glu-267 is a catalytic residue.

Belongs to the glucose-6-phosphate 1-epimerase family. Monomer in solution.

It carries out the reaction alpha-D-glucose 6-phosphate = beta-D-glucose 6-phosphate. The polypeptide is Putative glucose-6-phosphate 1-epimerase (yeaD) (Escherichia coli (strain K12)).